The sequence spans 455 residues: MTQPLHVIILAAGAGKRMKSVLPKVLQPIAGQPMLAHVIAAARELEPAAIHVVYGHGGEAVRQHFAGQPDLQWAEQAQQLGTGHAVAQAMPQVPDAAQVLVLYGDVPLIRAQTLRDLLAQPGRLAVLVAEMDDPTGYGRVLRDAEGKVGSIVEQKDANDDQLRVRTINTGIIAAESTALRRWLSQLSNSNAQGEYYLTDVFAFAAHEYTPAEMALVADAQEAEGANDPWQLSQLERAWQRRAVRALCAQGARVRDPARLDIRGTVSVGNDVLIDVDVVLEGNIVLGDGVTIGPFNRLKDVNLGPGTEVRAHCDLEGVITEGAAQVGPFARLRPGTVLADGVHVGNFVETKKVTLGVGSKANHLTYLGDAVIGSKVNIGAGTITCNYDGVNKSTTTIGDNAFIGSNSSLVAPVTIGDSATIAAGSVITRDAPDGKLTLARARQETIDGWKRPLKKS.

The pyrophosphorylase stretch occupies residues 1–228 (MTQPLHVIIL…AQEAEGANDP (228 aa)). UDP-N-acetyl-alpha-D-glucosamine is bound by residues 10 to 13 (LAAG), K24, Q76, 81 to 82 (GT), 103 to 105 (YGD), G138, E153, N168, and N226. A Mg(2+)-binding site is contributed by D105. N226 contacts Mg(2+). The segment at 229–249 (WQLSQLERAWQRRAVRALCAQ) is linker. The tract at residues 250–455 (GARVRDPARL…DGWKRPLKKS (206 aa)) is N-acetyltransferase. Residues R332 and K350 each coordinate UDP-N-acetyl-alpha-D-glucosamine. Catalysis depends on H362, which acts as the Proton acceptor. Positions 365 and 376 each coordinate UDP-N-acetyl-alpha-D-glucosamine. Residues A379, 385-386 (NY), S404, A422, and R439 contribute to the acetyl-CoA site.

It in the N-terminal section; belongs to the N-acetylglucosamine-1-phosphate uridyltransferase family. The protein in the C-terminal section; belongs to the transferase hexapeptide repeat family. As to quaternary structure, homotrimer. Mg(2+) serves as cofactor.

It localises to the cytoplasm. The catalysed reaction is alpha-D-glucosamine 1-phosphate + acetyl-CoA = N-acetyl-alpha-D-glucosamine 1-phosphate + CoA + H(+). It carries out the reaction N-acetyl-alpha-D-glucosamine 1-phosphate + UTP + H(+) = UDP-N-acetyl-alpha-D-glucosamine + diphosphate. Its pathway is nucleotide-sugar biosynthesis; UDP-N-acetyl-alpha-D-glucosamine biosynthesis; N-acetyl-alpha-D-glucosamine 1-phosphate from alpha-D-glucosamine 6-phosphate (route II): step 2/2. The protein operates within nucleotide-sugar biosynthesis; UDP-N-acetyl-alpha-D-glucosamine biosynthesis; UDP-N-acetyl-alpha-D-glucosamine from N-acetyl-alpha-D-glucosamine 1-phosphate: step 1/1. It functions in the pathway bacterial outer membrane biogenesis; LPS lipid A biosynthesis. Catalyzes the last two sequential reactions in the de novo biosynthetic pathway for UDP-N-acetylglucosamine (UDP-GlcNAc). The C-terminal domain catalyzes the transfer of acetyl group from acetyl coenzyme A to glucosamine-1-phosphate (GlcN-1-P) to produce N-acetylglucosamine-1-phosphate (GlcNAc-1-P), which is converted into UDP-GlcNAc by the transfer of uridine 5-monophosphate (from uridine 5-triphosphate), a reaction catalyzed by the N-terminal domain. In Stenotrophomonas maltophilia (strain R551-3), this protein is Bifunctional protein GlmU.